The following is a 166-amino-acid chain: Phosphopantetheine adenylyltransferase (166 aa).

Substrate is bound at residue threonine 10. Residues 10-11 (TF) and histidine 18 contribute to the ATP site. Lysine 42, leucine 75, and arginine 89 together coordinate substrate. Residues 90–92 (GVR), glutamate 100, and 125–131 (YTYVAST) each bind ATP.

It belongs to the bacterial CoaD family. In terms of assembly, homohexamer. Mg(2+) is required as a cofactor.

The protein localises to the cytoplasm. It catalyses the reaction (R)-4'-phosphopantetheine + ATP + H(+) = 3'-dephospho-CoA + diphosphate. The protein operates within cofactor biosynthesis; coenzyme A biosynthesis; CoA from (R)-pantothenate: step 4/5. Reversibly transfers an adenylyl group from ATP to 4'-phosphopantetheine, yielding dephospho-CoA (dPCoA) and pyrophosphate. The protein is Phosphopantetheine adenylyltransferase of Chlorobaculum parvum (strain DSM 263 / NCIMB 8327) (Chlorobium vibrioforme subsp. thiosulfatophilum).